The chain runs to 357 residues: Arginine kinase Met e 2 (357 aa).

Residues 9 to 91 enclose the Phosphagen kinase N-terminal domain; sequence KLEAGFKKLE…FDPIIEDYHV (83 aa). 64-68 provides a ligand contact to L-arginine; that stretch reads GVGIY. A Phosphagen kinase C-terminal domain is found at 119 to 356; the sequence is FVISTRVRCG…LELIKIEKEM (238 aa). Residues 122–126 and histidine 185 contribute to the ATP site; that span reads STRVR. Glutamate 225 is an L-arginine binding site. An ATP-binding site is contributed by arginine 229. Cysteine 271 contributes to the L-arginine binding site. Residues 280 to 284 and 309 to 314 each bind ATP; these read RASVH and RGTRGE. Glutamate 314 contacts L-arginine.

This sequence belongs to the ATP:guanido phosphotransferase family.

The enzyme catalyses L-arginine + ATP = N(omega)-phospho-L-arginine + ADP + H(+). Its function is as follows. Catalyzes the reversible transfer of high energy ATP gamma-phosphate group to L-arginine. The protein is Arginine kinase Met e 2 of Metapenaeus ensis (Greasyback shrimp).